Consider the following 350-residue polypeptide: 8-amino-7-oxononanoate synthase (350 aa).

77-78 is a pyridoxal 5'-phosphate binding site; the sequence is GY. H102 contributes to the substrate binding site. Residues S150, 175–178, and 204–207 contribute to the pyridoxal 5'-phosphate site; these read DDAH and TLSK. K207 carries the N6-(pyridoxal phosphate)lysine modification. Residue T316 coordinates substrate.

Belongs to the class-II pyridoxal-phosphate-dependent aminotransferase family. BioF subfamily. Homodimer. Pyridoxal 5'-phosphate is required as a cofactor.

It carries out the reaction 6-carboxyhexanoyl-[ACP] + L-alanine + H(+) = (8S)-8-amino-7-oxononanoate + holo-[ACP] + CO2. The protein operates within cofactor biosynthesis; biotin biosynthesis. Functionally, catalyzes the decarboxylative condensation of pimeloyl-[acyl-carrier protein] and L-alanine to produce 8-amino-7-oxononanoate (AON), [acyl-carrier protein], and carbon dioxide. This chain is 8-amino-7-oxononanoate synthase, found in Methylocella silvestris (strain DSM 15510 / CIP 108128 / LMG 27833 / NCIMB 13906 / BL2).